Reading from the N-terminus, the 182-residue chain is ATP synthase subunit b, chloroplastic (182 aa).

A helical transmembrane segment spans residues 36-56; the sequence is ILLLLLGLMYVLKEFLGSILV.

Belongs to the ATPase B chain family. As to quaternary structure, F-type ATPases have 2 components, F(1) - the catalytic core - and F(0) - the membrane proton channel. F(1) has five subunits: alpha(3), beta(3), gamma(1), delta(1), epsilon(1). F(0) has four main subunits: a(1), b(1), b'(1) and c(10-14). The alpha and beta chains form an alternating ring which encloses part of the gamma chain. F(1) is attached to F(0) by a central stalk formed by the gamma and epsilon chains, while a peripheral stalk is formed by the delta, b and b' chains.

It localises to the plastid. The protein resides in the chloroplast thylakoid membrane. Functionally, f(1)F(0) ATP synthase produces ATP from ADP in the presence of a proton or sodium gradient. F-type ATPases consist of two structural domains, F(1) containing the extramembraneous catalytic core and F(0) containing the membrane proton channel, linked together by a central stalk and a peripheral stalk. During catalysis, ATP synthesis in the catalytic domain of F(1) is coupled via a rotary mechanism of the central stalk subunits to proton translocation. In terms of biological role, component of the F(0) channel, it forms part of the peripheral stalk, linking F(1) to F(0). The protein is ATP synthase subunit b, chloroplastic of Gracilaria tenuistipitata var. liui (Red alga).